Here is an 81-residue protein sequence, read N- to C-terminus: Defensin-like protein 43 (81 aa).

Residues 1 to 27 (MGITKTSVTFLFLLILAAFVSNYNVLA) form the signal peptide. Disulfide bonds link Cys-40-Cys-79, Cys-44-Cys-67, Cys-53-Cys-77, and Cys-57-Cys-78.

The protein belongs to the DEFL family.

The protein resides in the secreted. This is Defensin-like protein 43 from Arabidopsis thaliana (Mouse-ear cress).